A 260-amino-acid polypeptide reads, in one-letter code: Ribosome maturation factor RimP (260 aa).

Residues 198 to 260 (QSLGILPPPP…RGDIDPIEGE (63 aa)) form a disordered region. 2 stretches are compositionally biased toward basic and acidic residues: residues 210–228 (AKTD…ENGK) and 238–254 (NTKE…RGDI).

The protein belongs to the RimP family.

The protein resides in the cytoplasm. Required for maturation of 30S ribosomal subunits. The chain is Ribosome maturation factor RimP from Nitrobacter winogradskyi (strain ATCC 25391 / DSM 10237 / CIP 104748 / NCIMB 11846 / Nb-255).